We begin with the raw amino-acid sequence, 308 residues long: Probable 5-dehydro-4-deoxyglucarate dehydratase (308 aa).

It belongs to the DapA family.

The catalysed reaction is 5-dehydro-4-deoxy-D-glucarate + H(+) = 2,5-dioxopentanoate + CO2 + H2O. It functions in the pathway carbohydrate acid metabolism; D-glucarate degradation; 2,5-dioxopentanoate from D-glucarate: step 2/2. In Bacillus licheniformis (strain ATCC 14580 / DSM 13 / JCM 2505 / CCUG 7422 / NBRC 12200 / NCIMB 9375 / NCTC 10341 / NRRL NRS-1264 / Gibson 46), this protein is Probable 5-dehydro-4-deoxyglucarate dehydratase.